A 2197-amino-acid chain; its full sequence is RNA1 polyprotein (2197 aa).

Topologically, residues 621–1167 (GLTDVFGVPL…YDWVYANGGK (547 aa)) are cytoplasmic. Residues 766–933 (VKRLSDLHKR…EGVAYNPSDP (168 aa)) form the SF3 helicase domain. 796–803 (GGPRCGKS) is a binding site for ATP. Residues 1168–1188 (LLLVLAAVILILFFGSACIKL) traverse the membrane as a helical segment. At 1189–1212 (MQAIFCGAAGGTVSMAAVGKMTVQ) the chain is on the lumenal side. Asparagine 1228 carries N-linked (GlcNAc...) asparagine; by host glycosylation. The Peptidase C3 domain occupies 1243–1475 (LAEAQFNESH…MPRYISHASF (233 aa)). Catalysis depends on for picornain 3C-like protease activity residues histidine 1283, glutamate 1331, and cysteine 1433. A RdRp catalytic domain is found at 1765–1888 (SVALNCDYSR…SIKPDTMKYF (124 aa)).

This sequence belongs to the nepoviruses RNA1 polyprotein family. Post-translationally, specific enzymatic cleavages by picornain 3C-like protease in vivo yield mature proteins. Picornain 3C-like protease is autocatalytically processed. NTB exists as NTB-VPg polyprotein as well as NTB mature protein. In terms of processing, VPg is uridylylated by the polymerase and is covalently linked to the 5'-end of genomic RNA. This uridylylated form acts as a nucleotide-peptide primer for the polymerase.

The protein resides in the host endoplasmic reticulum lumen. The protein localises to the host endoplasmic reticulum membrane. It catalyses the reaction RNA(n) + a ribonucleoside 5'-triphosphate = RNA(n+1) + diphosphate. In terms of biological role, picornain 3C-like protease is a thiol protease that cleaves at Gln-|-Gly or Gln-|-Ser sites in the P1 and P2 polyproteins. Its function is as follows. The VPg-NTB polyprotein may act as a membrane-anchor for the replication complex. In Tomato ringspot virus (isolate raspberry) (ToRSV), this protein is RNA1 polyprotein.